Reading from the N-terminus, the 441-residue chain is Ribosomal protein uS12 methylthiotransferase RimO (441 aa).

Positions 8-118 (PKIGFVSLGC…VLEHVHHYVP (111 aa)) constitute an MTTase N-terminal domain. [4Fe-4S] cluster-binding residues include Cys17, Cys53, Cys82, Cys150, Cys154, and Cys157. Residues 136–373 (LTPRHYAYLK…MQLQQQISAE (238 aa)) form the Radical SAM core domain. A TRAM domain is found at 376–441 (QEKVGKEILV…DEYDLWGSRV (66 aa)).

Belongs to the methylthiotransferase family. RimO subfamily. It depends on [4Fe-4S] cluster as a cofactor.

The protein resides in the cytoplasm. It catalyses the reaction L-aspartate(89)-[ribosomal protein uS12]-hydrogen + (sulfur carrier)-SH + AH2 + 2 S-adenosyl-L-methionine = 3-methylsulfanyl-L-aspartate(89)-[ribosomal protein uS12]-hydrogen + (sulfur carrier)-H + 5'-deoxyadenosine + L-methionine + A + S-adenosyl-L-homocysteine + 2 H(+). Functionally, catalyzes the methylthiolation of an aspartic acid residue of ribosomal protein uS12. The polypeptide is Ribosomal protein uS12 methylthiotransferase RimO (Escherichia fergusonii (strain ATCC 35469 / DSM 13698 / CCUG 18766 / IAM 14443 / JCM 21226 / LMG 7866 / NBRC 102419 / NCTC 12128 / CDC 0568-73)).